A 782-amino-acid polypeptide reads, in one-letter code: Nucleolar RNA helicase 2 (782 aa).

Residues methionine 1 to phenylalanine 184 are disordered. Phosphoserine occurs at positions 7 and 13. 2 stretches are compositionally biased toward basic and acidic residues: residues proline 26 to glutamate 42 and glutamate 99 to glutamate 117. Position 39 is an N6-acetyllysine (lysine 39). Residue lysine 114 forms a Glycyl lysine isopeptide (Lys-Gly) (interchain with G-Cter in SUMO1); alternate linkage. Residue lysine 114 forms a Glycyl lysine isopeptide (Lys-Gly) (interchain with G-Cter in SUMO2); alternate linkage. Serine 119 carries the phosphoserine modification. Positions glycine 134–glutamate 143 are enriched in basic and acidic residues. Lysine 135 is modified (N6-acetyllysine). Serine 145 and serine 169 each carry phosphoserine. Positions glutamate 172 to glutamate 181 are enriched in basic and acidic residues. Positions glycine 182–alanine 210 match the Q motif motif. A Helicase ATP-binding domain is found at phenylalanine 213–glutamine 392. Alanine 226–threonine 233 is an ATP binding site. Residue threonine 292 is modified to Phosphothreonine. The DEAD box signature appears at aspartate 335 to aspartate 338. One can recognise a Helicase C-terminal domain in the interval aspartate 425–lysine 569. The residue at position 563 (serine 563) is a Phosphoserine. Lysine 596 bears the N6-acetyllysine mark. Residues alanine 704 to glutamine 782 are disordered. 3 repeat units span residues glycine 720–arginine 724, phenylalanine 731–arginine 735, and phenylalanine 741–arginine 747. The interval glycine 720–arginine 747 is 3 X 5 AA repeats. Residues arginine 728–glutamine 756 are compositionally biased toward low complexity. At lysine 778 the chain carries N6-acetyllysine.

This sequence belongs to the DEAD box helicase family. DDX21/DDX50 subfamily. Homodimer; homodimerizes via its N-terminus. Found in a multi-helicase-TICAM1 complex at least composed of DHX36, DDX1, DDX21 and TICAM1; this complex exists in resting cells with or without poly(I:C) RNA ligand stimulation. Interacts (via C-terminus) with TICAM1 (via TIR domain). Interacts with DHX36 (via C-terminus); this interaction serves as bridges to TICAM1. Interacts (via C-terminus) with DDX1 (via B30.2/SPRY domain); this interaction serves as bridges to TICAM1. Component of the B-WICH complex, at least composed of SMARCA5/SNF2H, BAZ1B/WSTF, SF3B1, DEK, MYO1C, ERCC6, MYBBP1A and DDX21. Interacts with C1QBP. Interacts with JUN. Interacts with WDR46. Interacts with MCM3AP. Interacts with WDR43. Interacts with KPNA3. Interacts with GID4. Post-translationally, acetylation by CREBBP/CBP inhibits the helicase activity. Deacetylation by SIRT7 promotes the helicase activity and overcomes R-loop-mediated stalling of RNA polymerases.

Its subcellular location is the nucleus. It localises to the nucleolus. It is found in the nucleoplasm. The protein resides in the cytoplasm. The protein localises to the cytosol. Its subcellular location is the mitochondrion. The catalysed reaction is ATP + H2O = ADP + phosphate + H(+). Acetylation inhibits the helicase activity. Functionally, RNA helicase that acts as a sensor of the transcriptional status of both RNA polymerase (Pol) I and II: promotes ribosomal RNA (rRNA) processing and transcription from polymerase II (Pol II). Binds various RNAs, such as rRNAs, snoRNAs, 7SK and, at lower extent, mRNAs. In the nucleolus, localizes to rDNA locus, where it directly binds rRNAs and snoRNAs, and promotes rRNA transcription, processing and modification. Required for rRNA 2'-O-methylation, possibly by promoting the recruitment of late-acting snoRNAs SNORD56 and SNORD58 with pre-ribosomal complexes. In the nucleoplasm, binds 7SK RNA and is recruited to the promoters of Pol II-transcribed genes: acts by facilitating the release of P-TEFb from inhibitory 7SK snRNP in a manner that is dependent on its helicase activity, thereby promoting transcription of its target genes. Functions as a cofactor for JUN-activated transcription: required for phosphorylation of JUN at 'Ser-77'. Can unwind double-stranded RNA (helicase) and can fold or introduce a secondary structure to a single-stranded RNA (foldase). Together with SIRT7, required to prevent R-loop-associated DNA damage and transcription-associated genomic instability: deacetylation by SIRT7 activates the helicase activity, thereby overcoming R-loop-mediated stalling of RNA polymerases. Involved in rRNA processing. May bind to specific miRNA hairpins. Component of a multi-helicase-TICAM1 complex that acts as a cytoplasmic sensor of viral double-stranded RNA (dsRNA) and plays a role in the activation of a cascade of antiviral responses including the induction of pro-inflammatory cytokines via the adapter molecule TICAM1. This Rattus norvegicus (Rat) protein is Nucleolar RNA helicase 2 (Ddx21).